Consider the following 326-residue polypeptide: Adenine deaminase (326 aa).

The Zn(2+) site is built by His-14, His-16, and His-194. Catalysis depends on Glu-197, which acts as the Proton donor. Zn(2+) is bound at residue Asp-275. Asp-276 provides a ligand contact to substrate.

This sequence belongs to the metallo-dependent hydrolases superfamily. Adenosine and AMP deaminases family. Adenine deaminase type 2 subfamily. Zn(2+) serves as cofactor.

The enzyme catalyses adenine + H2O + H(+) = hypoxanthine + NH4(+). Catalyzes the hydrolytic deamination of adenine to hypoxanthine. Plays an important role in the purine salvage pathway and in nitrogen catabolism. The protein is Adenine deaminase of Crocosphaera subtropica (strain ATCC 51142 / BH68) (Cyanothece sp. (strain ATCC 51142)).